The chain runs to 829 residues: Periplasmic nitrate reductase (829 aa).

The segment at residues 1 to 30 (MKMTRRAFVKANAAASAAAVAGITLPASAA) is a signal peptide (tat-type signal). Positions 41 to 97 (ITWDKAPCRFCGTGCSVLVGTQNGKVVATQGDPEAPVNKGLNCIKGYFLSKIMYGQD) constitute a 4Fe-4S Mo/W bis-MGD-type domain. 4 residues coordinate [4Fe-4S] cluster: cysteine 48, cysteine 51, cysteine 55, and cysteine 83. Residues lysine 85, glutamine 152, asparagine 177, cysteine 181, 214-221 (WGSNMAEM), 245-249 (STYYH), 264-266 (QSD), methionine 374, glutamine 378, asparagine 484, 510-511 (SD), lysine 533, aspartate 560, and 718-727 (TGRVLEHWHT) contribute to the Mo-bis(molybdopterin guanine dinucleotide) site. Phenylalanine 794 is a binding site for substrate. Residues asparagine 802 and lysine 819 each contribute to the Mo-bis(molybdopterin guanine dinucleotide) site.

It belongs to the prokaryotic molybdopterin-containing oxidoreductase family. NasA/NapA/NarB subfamily. In terms of assembly, component of the periplasmic nitrate reductase NapAB complex composed of NapA and NapB. [4Fe-4S] cluster is required as a cofactor. Requires Mo-bis(molybdopterin guanine dinucleotide) as cofactor. In terms of processing, predicted to be exported by the Tat system. The position of the signal peptide cleavage has not been experimentally proven.

It is found in the periplasm. It catalyses the reaction 2 Fe(II)-[cytochrome] + nitrate + 2 H(+) = 2 Fe(III)-[cytochrome] + nitrite + H2O. Catalytic subunit of the periplasmic nitrate reductase complex NapAB. Receives electrons from NapB and catalyzes the reduction of nitrate to nitrite. This chain is Periplasmic nitrate reductase, found in Vibrio parahaemolyticus serotype O3:K6 (strain RIMD 2210633).